Here is a 211-residue protein sequence, read N- to C-terminus: Probable septum site-determining protein MinC (211 aa).

This sequence belongs to the MinC family. In terms of assembly, interacts with MinD and FtsZ.

Cell division inhibitor that blocks the formation of polar Z ring septums. Rapidly oscillates between the poles of the cell to destabilize FtsZ filaments that have formed before they mature into polar Z rings. Prevents FtsZ polymerization. The chain is Probable septum site-determining protein MinC from Clostridium acetobutylicum (strain ATCC 824 / DSM 792 / JCM 1419 / IAM 19013 / LMG 5710 / NBRC 13948 / NRRL B-527 / VKM B-1787 / 2291 / W).